Consider the following 455-residue polypeptide: Golgi pH regulator (455 aa).

4 helical membrane-spanning segments follow: residues 46–66, 79–99, 111–131, and 150–170; these read ITFAFSCTMFELIIFEILGAL, LYVILLVLIFVVPFYIGYFVV, LFACVVWFTFMYFFWKLGDPF, and VGVIGVTLMALLSGFGAVNCP. 2 N-linked (GlcNAc...) asparagine glycosylation sites follow: asparagine 180 and asparagine 243. Helical transmembrane passes span 290–310, 343–363, 378–398, and 425–445; these read GYFFSIYCVWKIFMATINIVF, ISFILVGIIIVTSIRGLLITL, VIVLVLAQIMGMYFVSSVLLM, and WFDVIFLVSALSSILFLYLAH.

The protein belongs to the Golgi pH regulator (TC 1.A.38) family. Homotrimer.

The protein resides in the golgi apparatus membrane. The catalysed reaction is iodide(out) = iodide(in). It catalyses the reaction chloride(in) = chloride(out). It carries out the reaction bromide(in) = bromide(out). The enzyme catalyses fluoride(in) = fluoride(out). Functionally, voltage-gated channel that enables the transfer of anions such as iodide, chloride, bromide and fluoride which may function in counter-ion conductance and participates in Golgi acidification. This is Golgi pH regulator from Salmo salar (Atlantic salmon).